Consider the following 425-residue polypeptide: Trigger factor (425 aa).

A PPIase FKBP-type domain is found at 163 to 248 (GDTAVIDFEG…VHEIKTKELP (86 aa)).

Belongs to the FKBP-type PPIase family. Tig subfamily.

The protein localises to the cytoplasm. It carries out the reaction [protein]-peptidylproline (omega=180) = [protein]-peptidylproline (omega=0). In terms of biological role, involved in protein export. Acts as a chaperone by maintaining the newly synthesized protein in an open conformation. Functions as a peptidyl-prolyl cis-trans isomerase. In Bacillus cereus (strain Q1), this protein is Trigger factor.